The chain runs to 142 residues: Protein lin-32 (142 aa).

Residues 30–48 (PLQSPNFSLDSPNYPDSLS) are compositionally biased toward polar residues. The interval 30–66 (PLQSPNFSLDSPNYPDSLSNGGGKDDKKKCRRYKTPS) is disordered. The bHLH domain maps to 72 to 124 (MRRSAANERERRRMNTLNVAYDELREVLPEIDSGKKLSKFETLQMAQKYIECL).

As to quaternary structure, forms a heterodimer with hlh-2. As to expression, expressed in PVD motor neurons.

Its subcellular location is the nucleus. Its function is as follows. Probable transcription factor which binds the E box motif 5'-CA[TC][AG]TG-3'. Essential for the specification of the neuroblast cell fate in the development of peripheral sense organs. Its role in the generation of sensory neurons may be through positively regulating the expression of the zinc finger protein ztf-11 during postdeirid neurogenesis. Required for specification of cell fate, acting in concert with lin-32, in the development of the male-specific genital sensilla (simple sense organs) known as rays. Involved in regulating glial specification, perhaps by suppressing a glial fate in different lineages during early embryogenesis. This chain is Protein lin-32, found in Caenorhabditis elegans.